We begin with the raw amino-acid sequence, 151 residues long: Superoxide dismutase [Cu-Zn] (151 aa).

A lipid anchor (S-palmitoyl cysteine) is attached at cysteine 6. The Cu cation site is built by histidine 45, histidine 47, and histidine 62. Cysteine 56 and cysteine 144 are joined by a disulfide. Zn(2+) contacts are provided by histidine 62, histidine 70, histidine 79, and aspartate 82. Histidine 118 lines the Cu cation pocket.

The protein belongs to the Cu-Zn superoxide dismutase family. As to quaternary structure, homodimer. It depends on Cu cation as a cofactor. Requires Zn(2+) as cofactor.

It is found in the cytoplasm. The protein localises to the nucleus. It catalyses the reaction 2 superoxide + 2 H(+) = H2O2 + O2. Its function is as follows. Destroys radicals which are normally produced within the cells and which are toxic to biological systems. This is Superoxide dismutase [Cu-Zn] (sod1) from Xenopus tropicalis (Western clawed frog).